Reading from the N-terminus, the 336-residue chain is MNYKDAGVNIDEGNKLVEMIKPIAKKTLTDNVLEGIGGFAALFEIKNYKNPVIVSSTDGVGTKLKIAFMMDKHDTVGIDLVAMCVNDIIVTGAKPLFFLDYFATGKLKSEVAVEVIKGIAEGCKIAGCALIGGETAELPGFYKEGEYDLAGFCVGIVEKEELIDTKSIKEGDAIIGLASSGIHSNGYSLVRKVFFEKNNFSVKDFIPELGMNLGDALLTPTKIYVKSIEALKELKIKGMAHITGGGFIDNIPRILRKSIAAKINKGSWKIPTIFNLIQRLGDIEEREMYRTFNMGIGMVVIVDPSDVDKALEKLNGIGEKAYVIGEIVESEGGVIL.

The protein belongs to the AIR synthase family.

The protein resides in the cytoplasm. The catalysed reaction is 2-formamido-N(1)-(5-O-phospho-beta-D-ribosyl)acetamidine + ATP = 5-amino-1-(5-phospho-beta-D-ribosyl)imidazole + ADP + phosphate + H(+). It participates in purine metabolism; IMP biosynthesis via de novo pathway; 5-amino-1-(5-phospho-D-ribosyl)imidazole from N(2)-formyl-N(1)-(5-phospho-D-ribosyl)glycinamide: step 2/2. The chain is Phosphoribosylformylglycinamidine cyclo-ligase from Thermoanaerobacter pseudethanolicus (strain ATCC 33223 / 39E) (Clostridium thermohydrosulfuricum).